The following is a 329-amino-acid chain: 4-hydroxythreonine-4-phosphate dehydrogenase (329 aa).

2 residues coordinate substrate: His-136 and Thr-137. The a divalent metal cation site is built by His-166, His-211, and His-266. The substrate site is built by Lys-274, Asn-283, and Arg-292.

This sequence belongs to the PdxA family. Homodimer. Requires Zn(2+) as cofactor. Mg(2+) is required as a cofactor. It depends on Co(2+) as a cofactor.

The protein resides in the cytoplasm. The catalysed reaction is 4-(phosphooxy)-L-threonine + NAD(+) = 3-amino-2-oxopropyl phosphate + CO2 + NADH. It participates in cofactor biosynthesis; pyridoxine 5'-phosphate biosynthesis; pyridoxine 5'-phosphate from D-erythrose 4-phosphate: step 4/5. Catalyzes the NAD(P)-dependent oxidation of 4-(phosphooxy)-L-threonine (HTP) into 2-amino-3-oxo-4-(phosphooxy)butyric acid which spontaneously decarboxylates to form 3-amino-2-oxopropyl phosphate (AHAP). The sequence is that of 4-hydroxythreonine-4-phosphate dehydrogenase from Shigella boydii serotype 4 (strain Sb227).